The sequence spans 764 residues: DNA-binding protein SATB1 (764 aa).

Residues 1–15 show a composition bias toward basic and acidic residues; sequence MDHLNEATQGKEHSE. Residues 1–56 form a disordered region; it reads MDHLNEATQGKEHSEMSNNVSDPKGPPAKIARLEQNGSPLGRGRLGSTGGKMQGVP. A Nuclear localization signal motif is present at residues 20–40; it reads VSDPKGPPAKIARLEQNGSPL. The segment covering 43 to 52 has biased composition (gly residues); sequence GRLGSTGGKM. A Glycyl lysine isopeptide (Lys-Gly) (interchain with G-Cter in SUMO2) cross-link involves residue lysine 51. Positions 71–172 constitute a CMP domain; the sequence is GTMLPVFCVV…VVTLKIQLHS (102 aa). The residue at position 136 (lysine 136) is an N6-acetyllysine. The Protein interaction motif lies at 139 to 143; the sequence is PVPLS. One can recognise a CUTL domain in the interval 175 to 248; that stretch reads KLEDLPPEQW…WYKHFKKTKD (74 aa). Residue serine 185 is modified to Phosphoserine. The nuclear matrix targeting sequence (NMTS) stretch occupies residues 224 to 278; sequence YYANVSAAKCQEFGRWYKHFKKTKDMMVEMDSLSELSQQGANHVNFGQQPVPGNT. The Nuclear matrix targeting sequence (NMTS) signature appears at 224–278; the sequence is YYANVSAAKCQEFGRWYKHFKKTKDMMVEMDSLSELSQQGANHVNFGQQPVPGNT. Polar residues predominate over residues 266–296; sequence HVNFGQQPVPGNTAEQPPSPAQLSHGSQPSV. The disordered stretch occupies residues 266-307; sequence HVNFGQQPVPGNTAEQPPSPAQLSHGSQPSVRTPLPNLHPGL. The segment at residues 361–448 is a DNA-binding region (CUT 1); that stretch reads LEQQVSTNTE…ERDRIYQDER (88 aa). DNA contacts are provided by residues glutamine 390, 400-410, and asparagine 425; that span reads RTQGLLSEILR. A disordered region spans residues 450 to 474; that stretch reads RSLNAASAMGPAPLLSTPPSRPPQV. Residues 484–571 constitute a DNA-binding region (CUT 2); that stretch reads NGKPENNTMN…ERDAIYEQES (88 aa). The segment at 591–650 is disordered; that stretch reads QIQQQQQQQQQQQQQQQPPPPPPQPQPQPQAGPRLPPRQPTVASSAESDEENRQKTRPRT. Residues 593-606 are compositionally biased toward low complexity; it reads QQQQQQQQQQQQQQ. A compositionally biased stretch (pro residues) spans 607–629; that stretch reads QPPPPPPQPQPQPQAGPRLPPRQ. A Phosphoserine modification is found at serine 638. A DNA-binding region (homeobox) is located at residues 646-705; that stretch reads TRPRTKISVEALGILQSFIQDVGLYPDEEAIQTLSAQLDLPKYTIIKFFQNQRYYLKHHG. A Glycyl lysine isopeptide (Lys-Gly) (interchain with G-Cter in SUMO) cross-link involves residue lysine 745.

The protein belongs to the CUT homeobox family. Interacts with PCAF. Interacts with sumoylated PML and HDAC1 Tat via the CMP domain. Also interacts with DYNLT3 and POLR2J2. Binds to EP300. Homodimer. Part of the nuclear protein complex gamma-globin promoter and enhancer binding factor (gamma-PE) composed at least of SATB1 and HOXB2. Interaction with CtBP1 when not acetylated stabilizes attachment to DNA and promotes transcription repression. Interacts with CUX1 (via DNA-binding domains); the interaction inhibits the attachment of both proteins to DNA. Post-translationally, sumoylated. Sumoylation promotes cleavage by caspases. In terms of processing, phosphorylated by PKC. Acetylated by PCAF. Phosphorylated form interacts with HDAC1, but unphosphorylated form interacts with PCAF. DNA binding properties are activated by phosphorylation and inactivated by acetylation. In opposition, gene expression is down-regulated by phosphorylation but up-regulated by acetylation. Cleaved at Asp-254 by caspase-3 and caspase-6 during T-cell apoptosis in thymus and during B-cell stimulation. The cleaved forms cannot dimerize and lose transcription regulation function because of impaired DNA and chromatin association. As to expression, expressed in the subventricular zone, rostral migratory stream and in the olfactory bulb (at protein level). Mainly expressed in thymus, spleen, and lymph nodes with a lower level observed in the brain.

It is found in the nucleus. The protein resides in the PML body. Its function is as follows. Required for the switching of fetal globin species, and beta- and gamma-globin genes regulation during erythroid differentiation. Plays a role in chromatin organization and nuclear architecture during apoptosis. Crucial silencing factor contributing to the initiation of X inactivation mediated by Xist RNA that occurs during embryogenesis and in lymphoma. Binds to DNA at special AT-rich sequences, the consensus SATB1-binding sequence (CSBS), at nuclear matrix- or scaffold-associated regions. Thought to recognize the sugar-phosphate structure of double-stranded DNA. Transcriptional repressor controlling nuclear and viral gene expression in a phosphorylated and acetylated status-dependent manner, by binding to matrix attachment regions (MARs) of DNA and inducing a local chromatin-loop remodeling. Acts as a docking site for several chromatin remodeling enzymes and also by recruiting corepressors (HDACs) or coactivators (HATs) directly to promoters and enhancers. Modulates genes that are essential in the maturation of the immune T-cell CD8SP from thymocytes. Promotes neuronal differentiation of neural stem/progenitor cells in the adult subventricular zone, possibly by positively regulating the expression of NEUROD1. This Mus musculus (Mouse) protein is DNA-binding protein SATB1 (Satb1).